The following is a 504-amino-acid chain: Cytochrome P450 3A16 (504 aa).

Position 443 (Cys-443) interacts with heme.

The protein belongs to the cytochrome P450 family. Requires heme as cofactor.

The protein localises to the endoplasmic reticulum membrane. Its subcellular location is the microsome membrane. It catalyses the reaction an organic molecule + reduced [NADPH--hemoprotein reductase] + O2 = an alcohol + oxidized [NADPH--hemoprotein reductase] + H2O + H(+). Functionally, cytochromes P450 are a group of heme-thiolate monooxygenases. In liver microsomes, this enzyme is involved in an NADPH-dependent electron transport pathway. It oxidizes a variety of structurally unrelated compounds, including steroids, fatty acids, and xenobiotics. This chain is Cytochrome P450 3A16 (Cyp3a16), found in Mus musculus (Mouse).